Here is a 199-residue protein sequence, read N- to C-terminus: Ribonuclease P protein subunit p25 (199 aa).

Residues Met1–Glu11 show a composition bias toward basic and acidic residues. Disordered stretches follow at residues Met1–Phe28 and Leu144–Ala199. Over residues Tyr151 to Ala166 the composition is skewed to pro residues. Phosphoserine is present on residues Ser172 and Ser182.

Belongs to the histone-like Alba family. In terms of assembly, component of nuclear RNase P and RNase MRP ribonucleoproteins. RNase P consists of a catalytic RNA moiety and 10 different protein chains; POP1, POP4, POP5, POP7, RPP14, RPP21, RPP25, RPP30, RPP38 and RPP40. Within the RNase P complex, POP1, POP7 and RPP25 form the 'finger' subcomplex, POP5, RPP14, RPP40 and homodimeric RPP30 form the 'palm' subcomplex, and RPP21, POP4 and RPP38 form the 'wrist' subcomplex. All subunits of the RNase P complex interact with the catalytic RNA. Several subunits of RNase P are also part of the RNase MRP complex. RNase MRP consists of a catalytic RNA moiety and about 8 protein subunits; POP1, POP7, RPP25, RPP30, RPP38, RPP40 and possibly also POP4 and POP5. POP7 forms a heterodimer with RPP25 that binds to the P3 stem loop of the catalytic RNA.

The protein resides in the nucleus. It localises to the nucleolus. Its function is as follows. Component of ribonuclease P, a ribonucleoprotein complex that generates mature tRNA molecules by cleaving their 5'-ends. Also a component of the MRP ribonuclease complex, which cleaves pre-rRNA sequences. The sequence is that of Ribonuclease P protein subunit p25 (RPP25) from Homo sapiens (Human).